A 137-amino-acid polypeptide reads, in one-letter code: Peptide methionine sulfoxide reductase MsrB (137 aa).

The segment at 1–33 (MSNNQDRPGQITDESLRERLSPEAYAVTRRAGT) is disordered. The region spanning 13–135 (DESLRERLSP…NSLSLDFKAA (123 aa)) is the MsrB domain. 4 residues coordinate Zn(2+): C52, C55, C101, and C104. C124 acts as the Nucleophile in catalysis.

It belongs to the MsrB Met sulfoxide reductase family. The cofactor is Zn(2+).

The enzyme catalyses L-methionyl-[protein] + [thioredoxin]-disulfide + H2O = L-methionyl-(R)-S-oxide-[protein] + [thioredoxin]-dithiol. The protein is Peptide methionine sulfoxide reductase MsrB of Thioalkalivibrio sulfidiphilus (strain HL-EbGR7).